Reading from the N-terminus, the 563-residue chain is Probable lysosomal cobalamin transporter (563 aa).

The next 5 helical transmembrane spans lie at 8 to 28 (LIWF…SVFI), 40 to 60 (FVTF…MLLP), 95 to 115 (VIYY…IPFA), 144 to 164 (YTLA…FAPM), and 188 to 208 (AFTF…VFYT). Residue Asn-228 is glycosylated (N-linked (GlcNAc...) asparagine). 4 consecutive transmembrane segments (helical) span residues 314 to 334 (GGFS…MTVI), 374 to 394 (IIFA…VVAV), 416 to 436 (MLLA…SVVM), and 506 to 526 (FGAL…VILV). A disordered region spans residues 537–563 (ERQLDEDAEEAEEESLLASTGRSGNPT). Residues 539–551 (QLDEDAEEAEEES) are compositionally biased toward acidic residues.

Belongs to the LIMR family. LMBRD1 subfamily.

Its subcellular location is the lysosome membrane. Probable lysosomal cobalamin transporter. Required to export cobalamin from lysosomes allowing its conversion to cofactors. This is Probable lysosomal cobalamin transporter from Neosartorya fischeri (strain ATCC 1020 / DSM 3700 / CBS 544.65 / FGSC A1164 / JCM 1740 / NRRL 181 / WB 181) (Aspergillus fischerianus).